The chain runs to 247 residues: Ribosomal RNA small subunit methyltransferase J (247 aa).

Residues 106–107 (RD), 122–123 (ER), and Asp-168 contribute to the S-adenosyl-L-methionine site.

This sequence belongs to the methyltransferase superfamily. RsmJ family.

Its subcellular location is the cytoplasm. It catalyses the reaction guanosine(1516) in 16S rRNA + S-adenosyl-L-methionine = N(2)-methylguanosine(1516) in 16S rRNA + S-adenosyl-L-homocysteine + H(+). In terms of biological role, specifically methylates the guanosine in position 1516 of 16S rRNA. This is Ribosomal RNA small subunit methyltransferase J from Alcanivorax borkumensis (strain ATCC 700651 / DSM 11573 / NCIMB 13689 / SK2).